Reading from the N-terminus, the 240-residue chain is Large ribosomal subunit protein uL2 (240 aa).

The span at 1 to 11 (MGKRLISQNRG) shows a compositional bias: polar residues. Disordered regions lie at residues 1–25 (MGKRLISQNRGRGTPKYRSPTHKRK) and 207–240 (GGRHQHIGKPSSVSRHTSPGRKVGHIASRRTGKR). Basic residues-rich tracts occupy residues 13-25 (GTPKYRSPTHKRK) and 224-240 (SPGRKVGHIASRRTGKR).

Belongs to the universal ribosomal protein uL2 family. Part of the 50S ribosomal subunit. Forms a bridge to the 30S subunit in the 70S ribosome.

In terms of biological role, one of the primary rRNA binding proteins. Required for association of the 30S and 50S subunits to form the 70S ribosome, for tRNA binding and peptide bond formation. It has been suggested to have peptidyltransferase activity; this is somewhat controversial. Makes several contacts with the 16S rRNA in the 70S ribosome. This is Large ribosomal subunit protein uL2 from Methanococcus maripaludis (strain DSM 14266 / JCM 13030 / NBRC 101832 / S2 / LL).